Consider the following 635-residue polypeptide: Ankyrin repeat and SOCS box protein 2 (635 aa).

The interval 8–16 (RGSQCTIGQ) is required for FLNA degradation. The region spanning 26–45 (SEDELVQMAIEQSLADKTRG) is the UIM domain. ANK repeat units follow at residues 104-133 (APAD…NLAE), 137-167 (EGWL…TIDQ), 171-200 (QEET…EPDI), 204-233 (SRET…DTNH), 237-266 (RGWT…KVES), 270-299 (YGIT…DINT), 303-332 (DNAS…DANK), 336-365 (DGLL…RTRI), 368-397 (SGVS…DVNT), 410-439 (RRSS…DPNR), 440-469 (DVIS…NIDA), and 476-504 (TAFP…DGEP). Residue S371 is modified to Phosphoserine; by MAPK. The 50-residue stretch at 586–635 (IKEKAEPPRPLAHLCRLRVRKAIGKYRIKLLDTLPLPGRLIRYLKYENTQ) folds into the SOCS box domain.

Belongs to the ankyrin SOCS box (ASB) family. In terms of assembly, component of a probable ECS E3 ubiquitin-protein ligase complex which contains CUL5, either RBX1 or RNF7/RBX2, Elongin BC complex (ELOB and ELOC) and ASB2. Interacts with SKP2. Through its interaction with SKP2, likely to bridge the formation of dimeric E3-ubiquitin-protein ligase complexes composed of an ECS complex and an SCF(SKP2) complex. Interacts with JAK2; the interaction targets JAK2 for Notch-mediated proteasomal degradation. Interacts with TCF3/E2A; the interaction is mediated by SKP2 and targets TCF3 for Notch-mediated proteasomal degradation. Interacts with DES. In terms of processing, monoubiquitinated. Post-translationally, not monoubiquitinated. Phosphorylation at Ser-371 is required for association with FLNA and subsequent FLNA degradation. Expressed in muscle cells. As to expression, expressed in hematopoietic cells.

It localises to the cytoplasm. The protein resides in the cytoskeleton. Its subcellular location is the stress fiber. It is found in the myofibril. The protein localises to the sarcomere. It localises to the z line. It participates in protein modification; protein ubiquitination. Its function is as follows. Substrate-recognition component of a SCF-like ECS (Elongin-Cullin-SOCS-box protein) E3 ubiquitin-protein ligase complex which mediates the ubiquitination and subsequent proteasomal degradation of target proteins. Mediates Notch-induced ubiquitination and degradation of substrates including TCF3/E2A and JAK2. Required during embryonic heart development for complete heart looping. Required for cardiomyocyte differentiation. Specifically promotes the ubiquitination of SMAD9 and targets it for proteasomal degradation, leading to avoid excessive accumulation of SMAD9. Plays a role in the regulation of NK-cell migration by modulating protein levels of filamin A/FLNA via regulation of its ubiquitination and proteasome degradation. Functionally, involved in myogenic differentiation and targets filamin FLNB for proteasomal degradation but not filamin FLNA. Also targets DES for proteasomal degradation. Acts as a negative regulator of skeletal muscle mass. In terms of biological role, targets filamins FLNA and FLNB for proteasomal degradation. This leads to enhanced adhesion of hematopoietic cells to fibronectin. Required for FLNA degradation in immature cardiomyocytes which is necessary for actin cytoskeleton remodeling, leading to proper organization of myofibrils and function of mature cardiomyocytes. Required for degradation of FLNA and FLNB in immature dendritic cells (DC) which enhances immature DC migration by promoting DC podosome formation and DC-mediated degradation of the extracellular matrix. Does not promote proteasomal degradation of tyrosine-protein kinases JAK1 or JAK2 in hematopoietic cells. The sequence is that of Ankyrin repeat and SOCS box protein 2 (ASB2) from Homo sapiens (Human).